The chain runs to 430 residues: UDP-glucuronate 4-epimerase 3 (430 aa).

A run of 2 helical transmembrane segments spans residues 29 to 49 (SVAK…IFFY) and 90 to 110 (GFSV…SAAL). 92–123 (SVLVTGAAGFVGTHVSAALKRRGDGVLGLDNF) is an NAD(+) binding site. Residue tyrosine 242 is the Proton acceptor of the active site.

The protein belongs to the NAD(P)-dependent epimerase/dehydratase family. As to quaternary structure, homodimer. As to expression, in roots, leaves, siliques, flowers, pollen and stems.

The protein localises to the golgi apparatus. The protein resides in the golgi stack membrane. The catalysed reaction is UDP-alpha-D-glucuronate = UDP-alpha-D-galacturonate. In terms of biological role, involved in the synthesis of the negatively charged monosaccharide that forms the backbone of pectic cell wall components. The chain is UDP-glucuronate 4-epimerase 3 (GAE3) from Arabidopsis thaliana (Mouse-ear cress).